We begin with the raw amino-acid sequence, 87 residues long: Small ribosomal subunit protein uS12m (87 aa).

It belongs to the universal ribosomal protein uS12 family.

Its subcellular location is the mitochondrion matrix. It localises to the kinetoplast. Its function is as follows. Protein S12 is involved in the translation initiation step. This chain is Small ribosomal subunit protein uS12m (RPS12), found in Trypanoplasma borreli.